Here is a 245-residue protein sequence, read N- to C-terminus: 14-3-3 protein zeta (245 aa).

This sequence belongs to the 14-3-3 family. Homodimer. In terms of tissue distribution, present in all adult tissues examined with the highest levels in the brain.

Its subcellular location is the cytoplasm. Its function is as follows. Adapter protein implicated in the regulation of a large spectrum of both general and specialized signaling pathways. Binds to a large number of partners, usually by recognition of a phosphoserine or phosphothreonine motif. Binding generally results in the modulation of the activity of the binding partner. This is 14-3-3 protein zeta (ywhaz) from Xenopus laevis (African clawed frog).